The primary structure comprises 503 residues: 11-hydroxysugiol 20-monooxygenase (503 aa).

The helical transmembrane segment at 2 to 22 (QVLIVASLAFLAAWLVYSRWS) threads the bilayer. Cys446 serves as a coordination point for heme.

The protein belongs to the cytochrome P450 family. Requires heme as cofactor. As to expression, highly expressed in roots.

The protein localises to the membrane. It catalyses the reaction 11-hydroxysugiol + reduced [NADPH--hemoprotein reductase] + O2 = 11,20-dihydroxysugiol + oxidized [NADPH--hemoprotein reductase] + H2O + H(+). It carries out the reaction 11-hydroxyferruginol + reduced [NADPH--hemoprotein reductase] + O2 = 11,20-dihydroxyferruginol + oxidized [NADPH--hemoprotein reductase] + H2O + H(+). It functions in the pathway secondary metabolite biosynthesis; terpenoid biosynthesis. In terms of biological role, monooxygenase that oxidizes 11-hydroxysugiol to produce 11,20-dihydroxysugiol. Can oxidize 11-hydroxyferruginol to produce 11,20-dihydroxyferruginol. These products are intermediates in tanshinone biosynthesis. In Salvia miltiorrhiza (Chinese sage), this protein is 11-hydroxysugiol 20-monooxygenase.